The following is a 489-amino-acid chain: Glycogen synthase (489 aa).

K18 contributes to the ADP-alpha-D-glucose binding site.

It belongs to the glycosyltransferase 1 family. Bacterial/plant glycogen synthase subfamily.

The enzyme catalyses [(1-&gt;4)-alpha-D-glucosyl](n) + ADP-alpha-D-glucose = [(1-&gt;4)-alpha-D-glucosyl](n+1) + ADP + H(+). The protein operates within glycan biosynthesis; glycogen biosynthesis. In terms of biological role, synthesizes alpha-1,4-glucan chains using ADP-glucose. This is Glycogen synthase from Rhodopseudomonas palustris (strain BisB18).